The sequence spans 439 residues: Divalent metal cation transporter MntH 1 (439 aa).

The next 9 membrane-spanning stretches (helical) occupy residues 64–84 (FGYA…LLQS), 139–161 (LLGV…VLAL), 171–191 (AIVL…LVLI), 214–234 (PLYL…LYLH), 262–282 (IGSL…AAAA), 300–320 (LLDP…ALLA), 359–379 (LVPA…KLLV), 380–400 (LSQV…IRFS), and 418–438 (LAWS…YFWF).

Belongs to the NRAMP family.

Its subcellular location is the cell inner membrane. H(+)-stimulated, divalent metal cation uptake system. The protein is Divalent metal cation transporter MntH 1 of Pseudomonas aeruginosa (strain ATCC 15692 / DSM 22644 / CIP 104116 / JCM 14847 / LMG 12228 / 1C / PRS 101 / PAO1).